Consider the following 401-residue polypeptide: Lipoyl synthase 1, mitochondrial (401 aa).

The N-terminal 25 residues, 1 to 25, are a transit peptide targeting the mitochondrion; the sequence is MWSSSSSLCRNPSFRRAWLSTVTVT. The tract at residues 49–79 is disordered; it reads IDDFSSTNAPTTTTHYTSSNGSPIVRQKAAP. Polar residues predominate over residues 51–70; sequence DFSSTNAPTTTTHYTSSNGS. [4Fe-4S] cluster contacts are provided by C117, C122, C128, C148, C152, C155, and S376. One can recognise a Radical SAM core domain in the interval 133–365; the sequence is EDQTATATIM…QETAMGMGFA (233 aa).

It belongs to the radical SAM superfamily. Lipoyl synthase family. It depends on [4Fe-4S] cluster as a cofactor.

Its subcellular location is the mitochondrion. It carries out the reaction [[Fe-S] cluster scaffold protein carrying a second [4Fe-4S](2+) cluster] + N(6)-octanoyl-L-lysyl-[protein] + 2 oxidized [2Fe-2S]-[ferredoxin] + 2 S-adenosyl-L-methionine + 4 H(+) = [[Fe-S] cluster scaffold protein] + N(6)-[(R)-dihydrolipoyl]-L-lysyl-[protein] + 4 Fe(3+) + 2 hydrogen sulfide + 2 5'-deoxyadenosine + 2 L-methionine + 2 reduced [2Fe-2S]-[ferredoxin]. It functions in the pathway protein modification; protein lipoylation via endogenous pathway; protein N(6)-(lipoyl)lysine from octanoyl-[acyl-carrier-protein]: step 2/2. Catalyzes the radical-mediated insertion of two sulfur atoms into the C-6 and C-8 positions of the octanoyl moiety bound to the lipoyl domains of lipoate-dependent enzymes, thereby converting the octanoylated domains into lipoylated derivatives. This chain is Lipoyl synthase 1, mitochondrial, found in Phaeodactylum tricornutum (strain CCAP 1055/1).